The chain runs to 630 residues: 1-deoxy-D-xylulose-5-phosphate synthase (630 aa).

Thiamine diphosphate contacts are provided by residues His72 and 113–115 (GHS). Asp144 provides a ligand contact to Mg(2+). Residues 145-146 (GA), Asn173, Tyr284, and Glu367 each bind thiamine diphosphate. A Mg(2+)-binding site is contributed by Asn173.

This sequence belongs to the transketolase family. DXPS subfamily. Homodimer. It depends on Mg(2+) as a cofactor. The cofactor is thiamine diphosphate.

The enzyme catalyses D-glyceraldehyde 3-phosphate + pyruvate + H(+) = 1-deoxy-D-xylulose 5-phosphate + CO2. It participates in metabolic intermediate biosynthesis; 1-deoxy-D-xylulose 5-phosphate biosynthesis; 1-deoxy-D-xylulose 5-phosphate from D-glyceraldehyde 3-phosphate and pyruvate: step 1/1. Functionally, catalyzes the acyloin condensation reaction between C atoms 2 and 3 of pyruvate and glyceraldehyde 3-phosphate to yield 1-deoxy-D-xylulose-5-phosphate (DXP). This Bacillus cereus (strain AH187) protein is 1-deoxy-D-xylulose-5-phosphate synthase.